The chain runs to 423 residues: Protein FAM43A (423 aa).

The span at 263 to 283 (EQELQEEEEEEQPEGCPEEEE) shows a compositional bias: acidic residues. 3 disordered regions span residues 263–298 (EQELQEEEEEEQPEGCPEEEENRAAEGDPAEEEAEA), 321–344 (RGEALGGGGGSLGPGAGPPPLLLG), and 382–423 (LSGD…PHSG). The segment covering 323 to 335 (EALGGGGGSLGPG) has biased composition (gly residues). The span at 383 to 393 (SGDSTGSESSI) shows a compositional bias: low complexity. Polar residues predominate over residues 401–411 (TSATAGDSSRQ).

It belongs to the FAM43 family.

This is Protein FAM43A (FAM43A) from Homo sapiens (Human).